Reading from the N-terminus, the 183-residue chain is Translocon-associated protein subunit beta (183 aa).

An N-terminal signal peptide occupies residues Met1–Ala17. Over Glu18–His146 the chain is Lumenal. The N-linked (GlcNAc...) asparagine glycan is linked to Asn88. A helical membrane pass occupies residues Phe147–Leu167. Topologically, residues Trp168–Asn183 are cytoplasmic.

Belongs to the TRAP-beta family. In terms of assembly, heterotetramer of TRAP-alpha, TRAP-beta, TRAP-delta and TRAP-gamma. Interacts with STING1.

The protein resides in the endoplasmic reticulum membrane. TRAP proteins are part of a complex whose function is to bind calcium to the ER membrane and thereby regulate the retention of ER resident proteins. The chain is Translocon-associated protein subunit beta (SSR2) from Bos taurus (Bovine).